The following is a 150-amino-acid chain: UPF0102 protein sll0189 (150 aa).

Belongs to the UPF0102 family.

The sequence is that of UPF0102 protein sll0189 from Synechocystis sp. (strain ATCC 27184 / PCC 6803 / Kazusa).